Reading from the N-terminus, the 313-residue chain is Short-chain dehydrogenase/reductase family 9C member 7 (313 aa).

29 to 53 (FITGCDSGFGNLLARQLVDRGMRVL) lines the NADP(+) pocket. S160 is a binding site for substrate. Residue Y172 is the Proton acceptor of the active site. S185 is modified (phosphoserine).

The protein belongs to the short-chain dehydrogenases/reductases (SDR) family.

It is found in the cytoplasm. It carries out the reaction a N-[omega-(9R,10R)-epoxy-(13R)-hydroxy-(11E)-octadecenoyloxy]acyl-beta-D-glucosyl-(1&lt;-&gt;1)-sphing-4E-enine + NAD(+) = a N-[omega-(9R,10R)-epoxy-13-oxo-(11E)-octadecenoyloxy]acyl-beta-D-glucosyl-(1&lt;-&gt;1)-sphing-4E-enine + NADH + H(+). The catalysed reaction is a N-[omega-(9R,10R)-epoxy-(13R)-hydroxy-(11E)-octadecenoyloxy]-acylsphing-4E-enine + NAD(+) = a N-[omega-(9R,10R)-epoxy-13-oxo-(11E)-octadecenoyloxy]-acylsphing-4E-enine + NADH + H(+). In terms of biological role, plays a crucial role in the formation of the epidermal permeability barrier. Catalyzes the NAD+-dependent dehydrogenation of the linoleate 9,10-trans-epoxy-11E-13-alcohol esterified in omega-O-acylceramides (such as in N-[omega-(9R,10R)-epoxy-(13R)-hydroxy-(11E)-octadecenoyloxy]-acylsphing-4E-enine) to the corresponding 13-ketone, the reactive moiety required for binding of epidermal ceramides to proteins. Displays weak conversion of all-trans-retinal to all-trans-retinol in the presence of NADH. Has apparently no steroid dehydrogenase activity. The sequence is that of Short-chain dehydrogenase/reductase family 9C member 7 (SDR9C7) from Bos taurus (Bovine).